Consider the following 190-residue polypeptide: Glucose-6-phosphate isomerase (190 aa).

Fe cation is bound by residues H89, H91, E98, and H137.

It belongs to the archaeal-type GPI family. Homodimer. Fe cation is required as a cofactor.

It is found in the cytoplasm. It catalyses the reaction alpha-D-glucose 6-phosphate = beta-D-fructose 6-phosphate. It functions in the pathway carbohydrate degradation; glycolysis; D-glyceraldehyde 3-phosphate and glycerone phosphate from D-glucose: step 2/4. Its activity is regulated as follows. Inhibited by mannose 6-phosphate, fructose 1-phosphate and fructose 1,6-bisphosphate. Its activity is also inhibited by Cobalt (II) ions &lt; EDTA &lt; nickel (II) ions &lt; zinc (II) ions &lt;&lt; cadmium (II) ions &lt; copper (II) ions. Sodium and potassium ions and manganese ions show little or no effect on activity. The polypeptide is Glucose-6-phosphate isomerase (pgiA) (Thermococcus litoralis).